The chain runs to 33 residues: Alpha-amanitin proprotein (33 aa).

Positions 1–10 (MSDINATRLP) are excised as a propeptide. Residue isoleucine 11 is modified to (3R,4R)-4,5-dihydroxyisoleucine; in form alpha-amanitin. The residue at position 11 (isoleucine 11) is a (3R,4S)-4-hydroxyisoleucine; in form gamma-amanitin. A cross-link (cyclopeptide (Ile-Pro)) is located at residues 11 to 18 (IWGIGCNP). The 2'-cysteinyl-6'-hydroxytryptophan sulfoxide (Trp-Cys) cross-link spans 12 to 16 (WGIGC). Proline 18 carries the post-translational modification 4-hydroxyproline. Positions 19-33 (SVGDEVTALLASGEA) are excised as a propeptide.

Belongs to the MSDIN fungal toxin family. Processed by the macrocyclase-peptidase enzyme POPB to yield a toxic cyclic decapeptide. POPB first removes 10 residues from the N-terminus. Conformational trapping of the remaining peptide forces the enzyme to release this intermediate rather than proceed to macrocyclization. The enzyme rebinds the remaining peptide in a different conformation and catalyzes macrocyclization of the N-terminal 8 residues.

Functionally, major toxin belonging to the bicyclic octapeptides amatoxins that acts by binding non-competitively to RNA polymerase II and greatly slowing the elongation of transcripts from target promoters. The chain is Alpha-amanitin proprotein from Amanita rimosa.